The chain runs to 506 residues: ATP synthase subunit alpha, chloroplastic (506 aa).

Residue 172–179 (GDRQTGKT) participates in ATP binding.

It belongs to the ATPase alpha/beta chains family. As to quaternary structure, F-type ATPases have 2 components, CF(1) - the catalytic core - and CF(0) - the membrane proton channel. CF(1) has five subunits: alpha(3), beta(3), gamma(1), delta(1), epsilon(1). CF(0) has four main subunits: a, b, b' and c.

Its subcellular location is the plastid. The protein localises to the chloroplast thylakoid membrane. The enzyme catalyses ATP + H2O + 4 H(+)(in) = ADP + phosphate + 5 H(+)(out). In terms of biological role, produces ATP from ADP in the presence of a proton gradient across the membrane. The alpha chain is a regulatory subunit. The protein is ATP synthase subunit alpha, chloroplastic of Pleurastrum terricola (Filamentous green alga).